A 449-amino-acid polypeptide reads, in one-letter code: MREVISIHVGQAGTQIGNACWELYCLEHGIEPDGRLSPEKTTKPLDDGFSTFFSETGSGKYVPRSIYVDLEPNVIDQVRTGTYRHLFHPEQLITGKEDAANNYARGHYTVGKELIDHVLDRIRRVADNCTGLQGFLVFHSFGGGTGSGFGALLLERLSVDYGKKSKLEFSVYPAPQVSTSVVEPYNSILTTHTTLEHSDCSFMVDNEAIYDICRRNLDIERPGYENLNRLIAQVVSSITASLRFDGSLNVDLNEFQTNLVPYPRIHFPLVTYAPLISAAKAHHEANSVAEITNACFEPNNQMVKCDPRNGKYMATCLLYRGDIVTKDVNCAVSSIRTKRTIQFVDWCPTGFKLGVCYQPPQYVPNGDLAKVNRAVCMLSNTTSIAEAWSRLDHKFDLMYSKRAFVHWYVGEGMEEGEFSEAREDLAALEKDYEEVGQDSIEGEIMEEEY.

Positions 11, 71, 140, 144, 145, 179, 206, and 228 each coordinate GTP. E71 serves as a coordination point for Mg(2+). The active site involves E254.

It belongs to the tubulin family. In terms of assembly, dimer of alpha and beta chains. A typical microtubule is a hollow water-filled tube with an outer diameter of 25 nm and an inner diameter of 15 nM. Alpha-beta heterodimers associate head-to-tail to form protofilaments running lengthwise along the microtubule wall with the beta-tubulin subunit facing the microtubule plus end conferring a structural polarity. Microtubules usually have 13 protofilaments but different protofilament numbers can be found in some organisms and specialized cells. Mg(2+) serves as cofactor.

The protein localises to the cytoplasm. It localises to the cytoskeleton. The enzyme catalyses GTP + H2O = GDP + phosphate + H(+). In terms of biological role, tubulin is the major constituent of microtubules, a cylinder consisting of laterally associated linear protofilaments composed of alpha- and beta-tubulin heterodimers. Microtubules grow by the addition of GTP-tubulin dimers to the microtubule end, where a stabilizing cap forms. Below the cap, tubulin dimers are in GDP-bound state, owing to GTPase activity of alpha-tubulin. The protein is Tubulin alpha chain (TUB1) of Pneumocystis carinii.